A 580-amino-acid chain; its full sequence is FAD-dependent monooxygenase DEP4 (580 aa).

47 to 50 (VWSK) contacts FAD. Residue 58–60 (FAQ) coordinates NADP(+). FAD is bound at residue valine 112. NADP(+) is bound by residues 186 to 205 (VGRSKSSYDAVYHLLCAGKK), 222 to 223 (AP), and 354 to 355 (DI). Methionine 473 serves as a coordination point for FAD.

This sequence belongs to the FAD-binding monooxygenase family. The cofactor is FAD.

It functions in the pathway polyketide biosynthesis. Part of the gene cluster that mediates the biosynthesis of depudecin, a highly oxidized eleven-carbon linear polyketide that acts as a histone deacetylase (HDAC) inhibitor and makes a small contribution to pathogenesis. The reducing polyketide synthase DEP5 is the central enzyme in depudecin biosynthesis by yielding the backbone polyketide chain. The monooxygenases DEP2 and DEP4, as well as the uncharacterized protein DEP1, then act as tailoring enzymes to modify the intermediate polyketide chain into depudecin. The polypeptide is FAD-dependent monooxygenase DEP4 (Fusarium langsethiae).